A 161-amino-acid polypeptide reads, in one-letter code: Cytochrome b6-f complex subunit 4 (161 aa).

3 helical membrane-spanning segments follow: residues 37–57 (LLYI…GLAV), 96–116 (LLGV…PFIE), and 132–152 (TVFL…TFPI).

The protein belongs to the cytochrome b family. PetD subfamily. In terms of assembly, the 4 large subunits of the cytochrome b6-f complex are cytochrome b6, subunit IV (17 kDa polypeptide, PetD), cytochrome f and the Rieske protein, while the 4 small subunits are PetG, PetL, PetM and PetN. The complex functions as a dimer.

Its subcellular location is the cellular thylakoid membrane. Component of the cytochrome b6-f complex, which mediates electron transfer between photosystem II (PSII) and photosystem I (PSI), cyclic electron flow around PSI, and state transitions. In Cyanothece sp. (strain PCC 7425 / ATCC 29141), this protein is Cytochrome b6-f complex subunit 4.